Here is a 156-residue protein sequence, read N- to C-terminus: ATP synthase subunit b (156 aa).

A helical membrane pass occupies residues 7-27 (LIAQFVVFFILAGFTMKFVWP).

The protein belongs to the ATPase B chain family. In terms of assembly, F-type ATPases have 2 components, F(1) - the catalytic core - and F(0) - the membrane proton channel. F(1) has five subunits: alpha(3), beta(3), gamma(1), delta(1), epsilon(1). F(0) has three main subunits: a(1), b(2) and c(10-14). The alpha and beta chains form an alternating ring which encloses part of the gamma chain. F(1) is attached to F(0) by a central stalk formed by the gamma and epsilon chains, while a peripheral stalk is formed by the delta and b chains.

The protein resides in the cell inner membrane. In terms of biological role, f(1)F(0) ATP synthase produces ATP from ADP in the presence of a proton or sodium gradient. F-type ATPases consist of two structural domains, F(1) containing the extramembraneous catalytic core and F(0) containing the membrane proton channel, linked together by a central stalk and a peripheral stalk. During catalysis, ATP synthesis in the catalytic domain of F(1) is coupled via a rotary mechanism of the central stalk subunits to proton translocation. Component of the F(0) channel, it forms part of the peripheral stalk, linking F(1) to F(0). In Herminiimonas arsenicoxydans, this protein is ATP synthase subunit b.